The following is a 289-amino-acid chain: Borealin (289 aa).

Residues 1-58 (MAPKKRSSRGTRTNTLRSRKLASFLKDFDREVQVRTKQIESDRQTLLKEVENLYNIEI) are required for interaction with INCENP. Residues 1–88 (MAPKKRSSRG…NKQALEEAAK (88 aa)) are required for centromere localization. Residues 1–150 (MAPKKRSSRG…KKSHKNLRSA (150 aa)) form a required for interaction with SENP3 region. Residues 10–109 (GTRTNTLRSR…TAEAIQTPLK (100 aa)) are required to form a minimal CPC core complex that localizes to the central spindle and midbody and properly executes the role of the CPC during cytokinesis. Positions 20–78 (KLASFLKDFDREVQVRTKQIESDRQTLLKEVENLYNIEILRLPKALQGMKWLDYFALGG) are required for interaction with INCENP and BIRC5. Position 91 is a citrulline (Arg-91). Phosphothreonine; by TTK is present on Thr-94. The residue at position 106 (Thr-106) is a Phosphothreonine. At Ser-110 the chain carries Phosphoserine. A disordered region spans residues 122–173 (SIKEEEEEEEEGGGGGGRTKKSHKNLRSAKVKRCLPSKKRTQSIQGRGRSKR). Acidic residues predominate over residues 123-133 (IKEEEEEEEEG). Over residues 139-162 (RTKKSHKNLRSAKVKRCLPSKKRT) the composition is skewed to basic residues. Lys-145 is covalently cross-linked (Glycyl lysine isopeptide (Lys-Gly) (interchain with G-Cter in SUMO2)). Phosphoserine is present on Ser-175. A phosphothreonine mark is found at Thr-198 and Thr-213. Phosphoserine occurs at positions 228, 233, 247, and 253.

It belongs to the borealin family. May form homooligomers and homodimers. Component of the chromosomal passenger complex (CPC) composed of at least BIRC5/survivin, CDCA8/borealin, INCENP, AURKB or AURKC; in the complex forms a triple-helix bundle-based subcomplex with INCENP and BIRC5. Interacts with SENP3, UBE2I and RANBP2. Interacts (phosphorylated) with SGO1 and SGO2A; the association is dependent on CDK1. Phosphorylated by TTK, essentially at Thr-94. Phosphorylation (probably by CDK1) promotes targeting of the CPC to centromeric DNA. Post-translationally, sumoylated by UBE2I and RANBP2. Desumoylated by SENP3 through the removal of SUMO2 and SUMO3. In terms of processing, citrullinated by PADI4.

It localises to the nucleus. The protein localises to the nucleolus. Its subcellular location is the cytoplasm. The protein resides in the chromosome. It is found in the centromere. It localises to the cytoskeleton. The protein localises to the spindle. Functionally, component of the chromosomal passenger complex (CPC), a complex that acts as a key regulator of mitosis. The CPC complex has essential functions at the centromere in ensuring correct chromosome alignment and segregation and is required for chromatin-induced microtubule stabilization and spindle assembly. In the complex, it may be required to direct the CPC to centromeric DNA. Major effector of the TTK kinase in the control of attachment-error-correction and chromosome alignment. The protein is Borealin (Cdca8) of Mus musculus (Mouse).